Reading from the N-terminus, the 281-residue chain is Probable endonuclease 4 (281 aa).

Zn(2+) is bound by residues His68, His108, Glu145, Asp179, His182, His216, Asp229, His231, and Glu261.

Belongs to the AP endonuclease 2 family. The cofactor is Zn(2+).

The catalysed reaction is Endonucleolytic cleavage to 5'-phosphooligonucleotide end-products.. Its function is as follows. Endonuclease IV plays a role in DNA repair. It cleaves phosphodiester bonds at apurinic or apyrimidinic (AP) sites, generating a 3'-hydroxyl group and a 5'-terminal sugar phosphate. The chain is Probable endonuclease 4 from Trichlorobacter lovleyi (strain ATCC BAA-1151 / DSM 17278 / SZ) (Geobacter lovleyi).